Here is a 327-residue protein sequence, read N- to C-terminus: Ribonucleoside-diphosphate reductase small chain (327 aa).

Fe cation-binding residues include aspartate 70, glutamate 101, and histidine 104. Residue tyrosine 108 is part of the active site. 3 residues coordinate Fe cation: glutamate 164, glutamate 198, and histidine 201.

Belongs to the ribonucleoside diphosphate reductase small chain family. As to quaternary structure, heterotetramer composed of a homodimer of the large subunit (R1) and a homodimer of the small subunit (R2). Larger multisubunit protein complex are also active, composed of (R1)n(R2)n. It depends on Fe cation as a cofactor.

It carries out the reaction a 2'-deoxyribonucleoside 5'-diphosphate + [thioredoxin]-disulfide + H2O = a ribonucleoside 5'-diphosphate + [thioredoxin]-dithiol. In terms of biological role, ribonucleoside-diphosphate reductase holoenzyme provides the precursors necessary for viral DNA synthesis. Allows virus growth in non-dividing cells. Catalyzes the biosynthesis of deoxyribonucleotides from the corresponding ribonucleotides. This is Ribonucleoside-diphosphate reductase small chain from Ornithodoros (relapsing fever ticks).